The primary structure comprises 940 residues: MSDYKFTLNLPETEFPMRGNLANREPEMLERWTKDGLYQQIRDSRIGRTPFILHDGPPYANGSIHIGHSVNKILKDIIIKSKTMSGFDAPYVPGWDCHGLPIELKVEQKVGKPGQKISAAEFREECRKYAAEQVNGQREDFIRLGVLGDWQNPYLTMDFSTEANIVRSLSKVIESGHLHKGVKPVHWCTDCGSALAEAEVEYEDKTSPAIDVAFVAADSKAVAAKFGVSDYSHPVSMVIWTTTPWTLPANRALSLSPELDYSLVEFEKDGVTQALILAEVLVESCLTRYNVESHTVLGSAKGAAFELVRFNHPFLDFDVPAILGDHVTTDAGTGIVHTAPGHGQDDFVVGQKYGLEVANPVGDNGVYKPDTEYFAGQHVFKANDNVVALLREKSALLNHVAYRHSYPHCWRHKTPIIFRATPQWFISMDNHGLRTQALKEIEQTQWIPDWGQSRIEKMVENRPDWCISRQRTWGVPITLFVNRETEELHPDSVSLMERVACRIEQQGIQAWWDLDAAELLGDEAEQYRKVTDTLDVWFDSGSTFSSVVAARPEFHGHGVDLYLEGSDQHRGWFMSSLMISTAMNGKAPYKQVLTHGFTVDGKGRKMSKSIGNVIAPQTVTNKLGADILRLWVAATDYSGEMTVSDEILNRSADAYRRIRNTARFLLANLNGFEPAKDLVAVEDMVALDRWVVRRAAALQQEIIEAYEQYNFHIVTQKLMQFCSVELGSFYLDIIKDRQYTAKQEGHARRSCQSALYLISEAMVRWIAPILSFTADEVWQLLPGERDAYVFTQEWYQGLKSVTLATDLSDDYWQQLLTVRNEVNKVIEQARRDKRIGGSLEAEVTLFADAALTEQLTHIGDELRFVLLTSEAKVLPLADATSEAVETELASLKLVVASSTAEKCERCWHHREEVGTIEAHPTLCTRCVTNIEGDGEVRLFA.

Positions 58–68 (PYANGSIHIGH) match the 'HIGH' region motif. Glu564 is a binding site for L-isoleucyl-5'-AMP. The 'KMSKS' region motif lies at 605-609 (KMSKS). ATP is bound at residue Lys608. Zn(2+) is bound by residues Cys903, Cys906, Cys923, and Cys926.

It belongs to the class-I aminoacyl-tRNA synthetase family. IleS type 1 subfamily. As to quaternary structure, monomer. Requires Zn(2+) as cofactor.

The protein localises to the cytoplasm. The enzyme catalyses tRNA(Ile) + L-isoleucine + ATP = L-isoleucyl-tRNA(Ile) + AMP + diphosphate. Its function is as follows. Catalyzes the attachment of isoleucine to tRNA(Ile). As IleRS can inadvertently accommodate and process structurally similar amino acids such as valine, to avoid such errors it has two additional distinct tRNA(Ile)-dependent editing activities. One activity is designated as 'pretransfer' editing and involves the hydrolysis of activated Val-AMP. The other activity is designated 'posttransfer' editing and involves deacylation of mischarged Val-tRNA(Ile). The chain is Isoleucine--tRNA ligase from Shewanella baltica (strain OS195).